A 187-amino-acid polypeptide reads, in one-letter code: Elongation factor P (187 aa).

This sequence belongs to the elongation factor P family.

The protein resides in the cytoplasm. It functions in the pathway protein biosynthesis; polypeptide chain elongation. In terms of biological role, involved in peptide bond synthesis. Stimulates efficient translation and peptide-bond synthesis on native or reconstituted 70S ribosomes in vitro. Probably functions indirectly by altering the affinity of the ribosome for aminoacyl-tRNA, thus increasing their reactivity as acceptors for peptidyl transferase. This chain is Elongation factor P, found in Rhodococcus jostii (strain RHA1).